Here is a 334-residue protein sequence, read N- to C-terminus: Phospholipase A1 1 (334 aa).

An N-terminal signal peptide occupies residues 1-23; the sequence is MMNLKYLLFFCLVQALHYCYAYG. Positions 24–33 are excised as a propeptide; it reads DPSLSNELDR. Cys37 and Cys120 form a disulfide bridge. Ser170 functions as the Nucleophile in the catalytic mechanism. The active-site Charge relay system is Asp198. 2 cysteine pairs are disulfide-bonded: Cys209-Cys214 and Cys252-Cys261. His263 acts as the Charge relay system in catalysis. Cystine bridges form between Cys278–Cys302, Cys279–Cys327, and Cys295–Cys300.

This sequence belongs to the AB hydrolase superfamily. Lipase family. Post-translationally, not glycosylated. In terms of tissue distribution, expressed by the venom gland.

Its subcellular location is the secreted. The catalysed reaction is a 1,2-diacyl-sn-glycero-3-phosphocholine + H2O = a 2-acyl-sn-glycero-3-phosphocholine + a fatty acid + H(+). Functionally, catalyzes the hydrolysis of phosphatidylcholine with phospholipase A1 activity (3.6 U/ml). May act as an allergen and induce hemolytic activity. In vivo, a mixture of this protein and Ves a 1.02 is able to paralyze crickets. In Vespa affinis (Lesser banded hornet), this protein is Phospholipase A1 1.